The following is a 518-amino-acid chain: Glucan 1,4-alpha-maltohexaosidase (518 aa).

A signal peptide spans M1–A33. Residues N139, D196, A219, D221, D232, D238, D240, and D242 each contribute to the Ca(2+) site. Residue D196 participates in Na(+) binding. Na(+) contacts are provided by D221, D232, and D238. D269 (nucleophile) is an active-site residue. Ca(2+) is bound at residue H273. The Proton donor role is filled by E299.

Belongs to the glycosyl hydrolase 13 family. Requires Ca(2+) as cofactor. The cofactor is Na(+).

Its subcellular location is the secreted. It carries out the reaction Hydrolysis of (1-&gt;4)-alpha-D-glucosidic linkages in amylaceous polysaccharides, to remove successive maltohexaose residues from the non-reducing chain ends.. The protein operates within glycan degradation; starch degradation. This chain is Glucan 1,4-alpha-maltohexaosidase, found in Bacillus sp. (strain 707).